Here is a 234-residue protein sequence, read N- to C-terminus: Phosphoglycolate phosphatase (234 aa).

Asp-8 acts as the Nucleophile in catalysis. Residues Asp-8 and Asp-10 each coordinate Mg(2+). Lys-157 lines the substrate pocket. Residues Asp-180 and Asp-184 each contribute to the Mg(2+) site.

This sequence belongs to the archaeal SPP-like hydrolase family. Requires Mg(2+) as cofactor.

The catalysed reaction is 2-phosphoglycolate + H2O = glycolate + phosphate. In terms of biological role, catalyzes the dephosphorylation of 2-phosphoglycolate. This is Phosphoglycolate phosphatase from Methanoculleus marisnigri (strain ATCC 35101 / DSM 1498 / JR1).